Reading from the N-terminus, the 86-residue chain is Large ribosomal subunit protein bL27 (86 aa).

Residues 1–23 form a disordered region; that stretch reads MAHKKAGGSTRNGRDSESKRLGV.

It belongs to the bacterial ribosomal protein bL27 family.

This chain is Large ribosomal subunit protein bL27, found in Alkalilimnicola ehrlichii (strain ATCC BAA-1101 / DSM 17681 / MLHE-1).